We begin with the raw amino-acid sequence, 126 residues long: Glycine cleavage system H protein (126 aa).

Residues 22–104 (VATIGITEYA…YEKAWMVKVE (83 aa)) enclose the Lipoyl-binding domain. Residue Lys-63 is modified to N6-lipoyllysine.

Belongs to the GcvH family. The glycine cleavage system is composed of four proteins: P, T, L and H. (R)-lipoate is required as a cofactor.

Its function is as follows. The glycine cleavage system catalyzes the degradation of glycine. The H protein shuttles the methylamine group of glycine from the P protein to the T protein. Is also involved in protein lipoylation via its role as an octanoyl/lipoyl carrier protein intermediate. This chain is Glycine cleavage system H protein, found in Staphylococcus aureus (strain MSSA476).